The primary structure comprises 308 residues: Maspardin (308 aa).

One can recognise an AB hydrolase-1 domain in the interval 87-159 (FCDGFRKLLD…NSFWLMPAFM (73 aa)). Ser304 bears the Phosphoserine mark.

Belongs to the AB hydrolase superfamily. As to quaternary structure, interacts with CD4. Interacts with ALDH16A1. In terms of tissue distribution, expressed in all tissues tested, including heart, brain, placenta, lung, liver, skeletal muscle, kidney and pancreas. Expressed in J.CaM1.6, HuT 78 and HeLa cell lines (at protein level).

The protein localises to the cytoplasm. The protein resides in the cytosol. Its subcellular location is the membrane. It localises to the endosome membrane. It is found in the golgi apparatus. The protein localises to the trans-Golgi network membrane. In terms of biological role, may play a role as a negative regulatory factor in CD4-dependent T-cell activation. This is Maspardin (SPG21) from Homo sapiens (Human).